The chain runs to 942 residues: Diacylglycerol kinase theta (942 aa).

Residues 1-59 (MAAAAEPGARAWLGGGSPRPGSPACSPVLGSGGRARPGPGPGPGPERAGVRAPGPAAAP) form a disordered region. Phosphoserine occurs at positions 22 and 26. Residues 45–59 (PERAGVRAPGPAAAP) show a composition bias toward low complexity. Phorbol-ester/DAG-type zinc fingers lie at residues 60–108 (GHSF…RIPC), 121–168 (AHCF…CSDC), and 183–234 (HHHW…APEC). The interval 269–295 (EPGEGGDGADGSAAVGPGRETQATPES) is disordered. Positions 395–494 (AQEVLKIYPG…TRFYVAESRD (100 aa)) constitute a Ras-associating domain. 2 short sequence motifs (LXXLL motif) span residues 555–559 (LYMLL) and 574–578 (LPDLL). The DAGKc domain maps to 584 to 721 (PDSCPLLVFV…MDRWTILLDA (138 aa)). The disordered stretch occupies residues 908–942 (PKVHMLRKAKQKPRRAGTTRDARADAAPAPESDPR). The segment covering 911-924 (HMLRKAKQKPRRAG) has biased composition (basic residues). Low complexity predominate over residues 932-942 (DAAPAPESDPR).

It belongs to the eukaryotic diacylglycerol kinase family. In terms of assembly, interacts with RHOA (constitutively activated, GTP-bound); the interaction inhibits DGKQ. Interacts with PRKCE. Interacts with PRKCH. Interacts with PLCB1. Interacts with NR5A1; the interaction requires both LXXLL motifs in DGKQ and is required for full phosphatidic acid-mediated activation of NR5A1. In terms of processing, phosphorylated by PRKCE and PRKCH in vitro.

The protein localises to the cytoplasm. Its subcellular location is the cytosol. The protein resides in the cell membrane. It is found in the synapse. It localises to the cytoskeleton. The protein localises to the nucleus. Its subcellular location is the nucleus speckle. The protein resides in the nucleus matrix. The enzyme catalyses a 1,2-diacyl-sn-glycerol + ATP = a 1,2-diacyl-sn-glycero-3-phosphate + ADP + H(+). It catalyses the reaction a 1-O-alkyl-sn-glycerol + ATP = a 1-O-alkyl-sn-glycero-3-phosphate + ADP + H(+). The catalysed reaction is 1-O-alkyl-2-acyl-sn-glycerol + ATP = 1-O-alkyl-2-acyl-sn-glycero-3-phosphate + ADP + H(+). It carries out the reaction 1,2-di-(9Z-octadecenoyl)-sn-glycerol + ATP = 1,2-di-(9Z-octadecenoyl)-sn-glycero-3-phosphate + ADP + H(+). The enzyme catalyses 1-O-hexadecyl-sn-glycerol + ATP = 1-O-hexadecyl-sn-glycero-3-phosphate + ADP + H(+). It catalyses the reaction 1-O-hexadecyl-2-acetyl-sn-glycerol + ATP = 1-O-hexadecyl-2-acetyl-sn-glycero-3-phosphate + ADP + H(+). The catalysed reaction is 1-octadecanoyl-2-(5Z,8Z,11Z,14Z-eicosatetraenoyl)-sn-glycerol + ATP = 1-octadecanoyl-2-(5Z,8Z,11Z,14Z-eicosatetraenoyl)-sn-glycero-3-phosphate + ADP + H(+). It functions in the pathway lipid metabolism; glycerolipid metabolism. Its activity is regulated as follows. Activated by phosphatidylserine. Functionally, diacylglycerol kinase that converts diacylglycerol/DAG into phosphatidic acid/phosphatidate/PA and regulates the respective levels of these two bioactive lipids. Thereby, acts as a central switch between the signaling pathways activated by these second messengers with different cellular targets and opposite effects in numerous biological processes. Within the adrenocorticotropic hormone signaling pathway, produces phosphatidic acid which in turn activates NR5A1 and subsequent steroidogenic gene transcription. Also functions downstream of the nerve growth factor signaling pathway being specifically activated in the nucleus by the growth factor. Through its diacylglycerol activity also regulates synaptic vesicle endocytosis. The chain is Diacylglycerol kinase theta from Homo sapiens (Human).